We begin with the raw amino-acid sequence, 449 residues long: Type 3 secretion system ATPase (449 aa).

Residue 178 to 183 (GCGKTT) coordinates ATP.

Belongs to the ATPase alpha/beta chains family. T3SS ATPase subfamily. In terms of assembly, the core secretion machinery of the T3SS is composed of approximately 20 different proteins, including cytoplasmic components, a base, an export apparatus and a needle. This subunit is part of the cytosolic complex. Forms homododecamers.

Its subcellular location is the cytoplasm. The catalysed reaction is ATP + H2O + cellular proteinSide 1 = ADP + phosphate + cellular proteinSide 2.. In terms of biological role, ATPase component of the type III secretion system (T3SS), also called injectisome, which is used to inject bacterial effector proteins into eukaryotic host cells. Acts as a molecular motor to provide the energy that is required for the export of proteins. Required for type III secretion apparatus (T3SA) formation, proper protein secretion, host cell invasion and virulence. May play a critical role in T3SS substrate recognition, disassembly of the effector/chaperone complex and unfolding of the effector in an ATP-dependent manner prior to secretion. This Pseudomonas syringae pv. tomato (strain ATCC BAA-871 / DC3000) protein is Type 3 secretion system ATPase.